Reading from the N-terminus, the 400-residue chain is Phosphoglycerate kinase (400 aa).

Substrate-binding positions include 22–24 (DLN), arginine 37, 60–63 (HLGR), arginine 119, and arginine 159. Residues lysine 209, glycine 297, glutamate 328, and 354 to 357 (GGDS) contribute to the ATP site.

This sequence belongs to the phosphoglycerate kinase family. As to quaternary structure, monomer.

The protein resides in the cytoplasm. It carries out the reaction (2R)-3-phosphoglycerate + ATP = (2R)-3-phospho-glyceroyl phosphate + ADP. Its pathway is carbohydrate degradation; glycolysis; pyruvate from D-glyceraldehyde 3-phosphate: step 2/5. The polypeptide is Phosphoglycerate kinase (Saccharopolyspora erythraea (strain ATCC 11635 / DSM 40517 / JCM 4748 / NBRC 13426 / NCIMB 8594 / NRRL 2338)).